Here is a 515-residue protein sequence, read N- to C-terminus: Zinc-binding protein AdcA (515 aa).

Positions 1 to 28 are cleaved as a signal peptide; that stretch reads MKKKILLMMSLISVFFAWQLTQAKQVLA. Zn(2+) is bound at residue His-66. The segment at 125–148 is disordered; that stretch reads DHHHEDADKKHEHNKHSEEGHNHA. The his-rich loop stretch occupies residues 129–148; sequence EDADKKHEHNKHSEEGHNHA. Residues His-152, His-216, and Glu-291 each coordinate Zn(2+).

It belongs to the bacterial solute-binding protein 9 family.

Functionally, part of the ATP-binding cassette (ABC) transport system AdcABC involved in zinc import. Binds zinc with high affinity and specificity and delivers it to the membrane permease for translocation into the cytoplasm. The polypeptide is Zinc-binding protein AdcA (adcA) (Streptococcus pyogenes serotype M6 (strain ATCC BAA-946 / MGAS10394)).